The primary structure comprises 157 residues: Endoribonuclease YbeY (157 aa).

His-112, His-116, and His-122 together coordinate Zn(2+).

It belongs to the endoribonuclease YbeY family. Requires Zn(2+) as cofactor.

It localises to the cytoplasm. In terms of biological role, single strand-specific metallo-endoribonuclease involved in late-stage 70S ribosome quality control and in maturation of the 3' terminus of the 16S rRNA. The polypeptide is Endoribonuclease YbeY (Marinobacter nauticus (strain ATCC 700491 / DSM 11845 / VT8) (Marinobacter aquaeolei)).